Consider the following 364-residue polypeptide: tRNA 2-selenouridine synthase (364 aa).

Residues 14-137 (LLADTPLIDV…LRQTAIQATW (124 aa)) enclose the Rhodanese domain. Cys-97 functions as the S-selanylcysteine intermediate in the catalytic mechanism.

Belongs to the SelU family. Monomer.

The catalysed reaction is 5-methylaminomethyl-2-thiouridine(34) in tRNA + selenophosphate + (2E)-geranyl diphosphate + H2O + H(+) = 5-methylaminomethyl-2-selenouridine(34) in tRNA + (2E)-thiogeraniol + phosphate + diphosphate. The enzyme catalyses 5-methylaminomethyl-2-thiouridine(34) in tRNA + (2E)-geranyl diphosphate = 5-methylaminomethyl-S-(2E)-geranyl-thiouridine(34) in tRNA + diphosphate. It catalyses the reaction 5-methylaminomethyl-S-(2E)-geranyl-thiouridine(34) in tRNA + selenophosphate + H(+) = 5-methylaminomethyl-2-(Se-phospho)selenouridine(34) in tRNA + (2E)-thiogeraniol. It carries out the reaction 5-methylaminomethyl-2-(Se-phospho)selenouridine(34) in tRNA + H2O = 5-methylaminomethyl-2-selenouridine(34) in tRNA + phosphate. Functionally, involved in the post-transcriptional modification of the uridine at the wobble position (U34) of tRNA(Lys), tRNA(Glu) and tRNA(Gln). Catalyzes the conversion of 2-thiouridine (S2U-RNA) to 2-selenouridine (Se2U-RNA). Acts in a two-step process involving geranylation of 2-thiouridine (S2U) to S-geranyl-2-thiouridine (geS2U) and subsequent selenation of the latter derivative to 2-selenouridine (Se2U) in the tRNA chain. The protein is tRNA 2-selenouridine synthase of Salmonella enteritidis.